Consider the following 330-residue polypeptide: Phenylalanine--tRNA ligase alpha subunit (330 aa).

Glu255 provides a ligand contact to Mg(2+).

The protein belongs to the class-II aminoacyl-tRNA synthetase family. Phe-tRNA synthetase alpha subunit type 1 subfamily. In terms of assembly, tetramer of two alpha and two beta subunits. Mg(2+) serves as cofactor.

Its subcellular location is the cytoplasm. It catalyses the reaction tRNA(Phe) + L-phenylalanine + ATP = L-phenylalanyl-tRNA(Phe) + AMP + diphosphate + H(+). In Acinetobacter baumannii (strain AYE), this protein is Phenylalanine--tRNA ligase alpha subunit.